A 235-amino-acid polypeptide reads, in one-letter code: Mediator of RNA polymerase II transcription subunit 7 (235 aa).

The protein belongs to the Mediator complex subunit 7 family. In terms of assembly, component of the Mediator complex.

The protein resides in the nucleus. Functionally, component of the Mediator complex, a coactivator involved in the regulated transcription of nearly all RNA polymerase II-dependent genes. Mediator functions as a bridge to convey information from gene-specific regulatory proteins to the basal RNA polymerase II transcription machinery. Mediator is recruited to promoters by direct interactions with regulatory proteins and serves as a scaffold for the assembly of a functional preinitiation complex with RNA polymerase II and the general transcription factors. The chain is Mediator of RNA polymerase II transcription subunit 7 (MED7) from Yarrowia lipolytica (strain CLIB 122 / E 150) (Yeast).